Reading from the N-terminus, the 384-residue chain is MAGAEWKSLEECLEKHLPLPDLQEVKRVLYGKELRKLDLPREAFEAASREDFELQGYAFEAAEEQLRRPRIVHVGLVQNRIPLPANAPVAEQVSALHRRIKAIVEVAAMCGVNIICFQEAWTMPFAFCTREKLPWTEFAESAEDGPTTRFCQKLAKNHDMVVVSPILERDSEHGDVLWNTAVVISNSGAVLGKTRKNHIPRVGDFNESTYYMEGNLGHPVFQTQFGRIAVNICYGRHHPLNWLMYSINGAEIIFNPSATIGALSESLWPIEARNAAIANHCFTCAINRVGTEHFPNEFTSGDGKKAHQDFGYFYGSSYVAAPDSSRTPGLSRSRDGLLVAKLDLNLCQQVNDVWNFKMTGRYEMYARELAEAVKSNYSPTIVKE.

One can recognise a CN hydrolase domain in the interval 72–344 (VHVGLVQNRI…DGLLVAKLDL (273 aa)). E119 serves as the catalytic Proton acceptor. K196 functions as the Proton donor in the catalytic mechanism. C233 (nucleophile) is an active-site residue. Residue S378 is modified to Phosphoserine.

This sequence belongs to the carbon-nitrogen hydrolase superfamily. BUP family. In terms of assembly, homodimer, homotetramer, homooctamer; can also form higher homooligomers. Detected in liver (at protein level).

It localises to the cytoplasm. The enzyme catalyses 3-(carbamoylamino)propanoate + H2O + 2 H(+) = beta-alanine + NH4(+) + CO2. It carries out the reaction 3-(carbamoylamino)-2-methylpropanoate + H2O + 2 H(+) = (R)-3-amino-2-methylpropanoate + NH4(+) + CO2. It participates in amino-acid biosynthesis; beta-alanine biosynthesis. With respect to regulation, strongly inhibited by 50 mM Zn(2+). Not inhibited by EDTA. Competitively inhibited by beta-alanine, 5-aminolevulinic acid (ALA), beta-aminoisobutyrate and 4-ureidobutyrate. In terms of biological role, catalyzes a late step in pyrimidine degradation. Converts N-carbamoyl-beta-alanine (3-ureidopropanoate) into beta-alanine, ammonia and carbon dioxide. Likewise, converts N-carbamoyl-beta-aminoisobutyrate (3-ureidoisobutyrate) into beta-aminoisobutyrate, ammonia and carbon dioxide. The chain is Beta-ureidopropionase (UPB1) from Homo sapiens (Human).